The sequence spans 254 residues: Ciliary microtubule associated protein 1A (254 aa).

STPGR repeat units follow at residues 180–205 (PGPA…MAAR) and 216–241 (PGPG…FGIK). The interval 207 to 228 (EPPGDKTLKPGPGAHSPEKVTL) is disordered.

This sequence belongs to the CIMAP family. In terms of assembly, microtubule inner protein component of sperm flagellar doublet microtubules. In terms of tissue distribution, testis-specific (at protein level). Expression restricted to the germ cell fraction, absent in somatic cell fractions such as Sertoli and Leydig cells. Expression detected in the third week postpartum (23 days) after haploid germ cells developed, expression increased with age. Expressed in the tails of elongated spermatids sticking out toward the tubular lumen, and in cytoplasmic droplets still attached to the spermatid tail membrane. Expressed in the tails of mature sperm, from the connecting piece proximal to the head, along the middle and principal pieces, down to the distal end piece.

Its subcellular location is the cytoplasm. It localises to the cytoskeleton. The protein localises to the flagellum axoneme. Its function is as follows. Outer dense fibers are filamentous structures located on the outside of the axoneme in the midpiece and principal piece of the mammalian sperm tail. May help to maintain the passive elastic structures and elastic recoil of the sperm tail. The chain is Ciliary microtubule associated protein 1A (Cimap1a) from Mus musculus (Mouse).